The primary structure comprises 810 residues: DNA-binding protein REB1 (810 aa).

Basic and acidic residues-rich tracts occupy residues 1–10 (MPSGHNDKNA) and 29–44 (HQNH…LENK). 5 disordered regions span residues 1–80 (MPSG…ENIS), 114–161 (NQQD…GVDD), 180–243 (NNNN…TNND), 294–313 (HGLN…LSNS), and 346–365 (QDTQ…AGSV). 2 stretches are compositionally biased toward low complexity: residues 51-64 (IVES…NNND) and 124-135 (NNNTDNGNDSNN). Over residues 149–161 (DKNKKDAGVGVDD) the composition is skewed to basic and acidic residues. Residues 180–191 (NNNNNNSIANDS) are compositionally biased toward low complexity. Residues 198–208 (HDNGNNHENSQ) show a composition bias toward basic and acidic residues. The span at 346–355 (QDTQPHQQKS) shows a compositional bias: polar residues. Residue S355 is modified to Phosphoserine. The HTH myb-type domain occupies 470–523 (HIFEQRGKWTAEEEQELAKLCAEKEGQWAEIGKTLGRMPEDCRDRWRNYVKCGT). The H-T-H motif DNA-binding region spans 497 to 519 (WAEIGKTLGRMPEDCRDRWRNYV). The tract at residues 572–667 (QNDHRNNDED…STHSKSLSNT (96 aa)) is disordered. Low complexity predominate over residues 586–606 (ASAAAAAAAAIQEQQQLLQQK). A compositionally biased stretch (basic and acidic residues) spans 627–636 (DNKDEDKPHD). Positions 643–667 (DDNSQNSMVPAPSATSTHSKSLSNT) are enriched in polar residues. The Myb-like domain maps to 692 to 717 (NWTIVSERMGGTRSRIQCRYKWNKLV). Residue K807 forms a Glycyl lysine isopeptide (Lys-Gly) (interchain with G-Cter in SUMO) linkage.

Its subcellular location is the nucleus. Its function is as follows. DNA-binding protein that recognizes sites within both the enhancer and the promoter of rRNA transcription, as well as upstream of many genes transcribed by RNA polymerase II. It is essential for cell growth. May stimulate or inhibit transcription. Specifically recognizes the sequence 5'-CCGGGTA-3' or 5'-CGGGTRR-3' (where R is any purine). A member of the general regulatory factors (GRFs) which act as genome partitioners. Acts as a chromatin insulator which are known as STARs (Subtelomeric anti-silencing region). STARs prevent negative or positive transcription influence by extending across chromatin to a promoter. In Saccharomyces cerevisiae (strain ATCC 204508 / S288c) (Baker's yeast), this protein is DNA-binding protein REB1 (REB1).